The chain runs to 364 residues: UDP-N-acetylglucosamine--N-acetylmuramyl-(pentapeptide) pyrophosphoryl-undecaprenol N-acetylglucosamine transferase (364 aa).

Residues 15–17, asparagine 123, arginine 164, serine 191, and glutamine 286 each bind UDP-N-acetyl-alpha-D-glucosamine; that span reads TGG.

The protein belongs to the glycosyltransferase 28 family. MurG subfamily.

The protein resides in the cell inner membrane. The catalysed reaction is di-trans,octa-cis-undecaprenyl diphospho-N-acetyl-alpha-D-muramoyl-L-alanyl-D-glutamyl-meso-2,6-diaminopimeloyl-D-alanyl-D-alanine + UDP-N-acetyl-alpha-D-glucosamine = di-trans,octa-cis-undecaprenyl diphospho-[N-acetyl-alpha-D-glucosaminyl-(1-&gt;4)]-N-acetyl-alpha-D-muramoyl-L-alanyl-D-glutamyl-meso-2,6-diaminopimeloyl-D-alanyl-D-alanine + UDP + H(+). It participates in cell wall biogenesis; peptidoglycan biosynthesis. Functionally, cell wall formation. Catalyzes the transfer of a GlcNAc subunit on undecaprenyl-pyrophosphoryl-MurNAc-pentapeptide (lipid intermediate I) to form undecaprenyl-pyrophosphoryl-MurNAc-(pentapeptide)GlcNAc (lipid intermediate II). The sequence is that of UDP-N-acetylglucosamine--N-acetylmuramyl-(pentapeptide) pyrophosphoryl-undecaprenol N-acetylglucosamine transferase from Prochlorococcus marinus (strain MIT 9515).